A 513-amino-acid chain; its full sequence is MQLNPSEISELIKSRIQGLEASADVRNQGTVISVTDGIVRIHGLSEVMQGEMLEFPGNTFGLALNLERDSVGAVILGEYEHISEGDVVKTTGRILEVPVGPELLGRVVDALGNPIDGKGPINAKKTDAIEKIAPGVIWRKSVSEPVQTGLKSIDAMVPVGRGQRELIIGDRQCGKTAVAVDTIINQKGKNLFCIYVAIGQKASSIMNVVRKLEETGALEYTIVVAASASESAAMQYLAPYAGCTMGEYFRDRGQDALIVYDDLTKQAWAYRQISLLLRRPPGREAYPGDVFYLHSRLLERAARVSEDYVEKFTNGEVKGKSGSLTALPVIETQAGDVTAFVPTNVISITDGQIFLETDLFNAGIRPAINAGVSVSRVGGAAQTKVVKKLSGGIRTDLAQYRELAAFAQFASDLDEATRKQLERGRRVTELLKQPQYQPLQVWELAVALFAANNGYLDDLEVAQVLPFEKGLRDYLKSKHADLIKRIEDTKELSKDDEALLHTALKDFKKSGAY.

ATP is bound at residue 169–176 (GDRQCGKT).

It belongs to the ATPase alpha/beta chains family. As to quaternary structure, F-type ATPases have 2 components, CF(1) - the catalytic core - and CF(0) - the membrane proton channel. CF(1) has five subunits: alpha(3), beta(3), gamma(1), delta(1), epsilon(1). CF(0) has three main subunits: a(1), b(2) and c(9-12). The alpha and beta chains form an alternating ring which encloses part of the gamma chain. CF(1) is attached to CF(0) by a central stalk formed by the gamma and epsilon chains, while a peripheral stalk is formed by the delta and b chains.

The protein resides in the cell inner membrane. It carries out the reaction ATP + H2O + 4 H(+)(in) = ADP + phosphate + 5 H(+)(out). In terms of biological role, produces ATP from ADP in the presence of a proton gradient across the membrane. The alpha chain is a regulatory subunit. The polypeptide is ATP synthase subunit alpha 2 (Paraburkholderia xenovorans (strain LB400)).